Here is a 469-residue protein sequence, read N- to C-terminus: Argininosuccinate lyase (469 aa).

This sequence belongs to the lyase 1 family. Argininosuccinate lyase subfamily.

It localises to the cytoplasm. It carries out the reaction 2-(N(omega)-L-arginino)succinate = fumarate + L-arginine. It participates in amino-acid biosynthesis; L-arginine biosynthesis; L-arginine from L-ornithine and carbamoyl phosphate: step 3/3. This chain is Argininosuccinate lyase, found in Burkholderia multivorans (strain ATCC 17616 / 249).